The chain runs to 332 residues: UPF0194 membrane protein YbhG (332 aa).

Positions 1–16 (MMKKPVVIGLAVVVLA) are cleaved as a signal peptide. Positions 108-209 (EEIAQAAAAV…LNLQDSTLIA (102 aa)) form a coiled coil.

The protein belongs to the UPF0194 family.

It localises to the periplasm. The polypeptide is UPF0194 membrane protein YbhG (Shigella boydii serotype 4 (strain Sb227)).